The following is a 100-amino-acid chain: Class II hydrophobin CU (100 aa).

The first 25 residues, 1 to 25, serve as a signal peptide directing secretion; sequence MQFSIATIALFLSSAMAAPYSGNSN. Intrachain disulfides connect cysteine 32/cysteine 82, cysteine 42/cysteine 72, cysteine 43/cysteine 55, and cysteine 83/cysteine 94.

The protein belongs to the cerato-ulmin hydrophobin family. As to quaternary structure, homotetramer. Further self-assembles to form highly ordered films at water-air interfaces through intermolecular interactions.

Its subcellular location is the secreted. The protein resides in the cell wall. Its function is as follows. Aerial growth, conidiation, and dispersal of filamentous fungi in the environment rely upon a capability of their secreting small amphipathic proteins called hydrophobins (HPBs) with low sequence identity. Class I can self-assemble into an outermost layer of rodlet bundles on aerial cell surfaces, conferring cellular hydrophobicity that supports fungal growth, development and dispersal; whereas Class II form highly ordered films at water-air interfaces through intermolecular interactions but contribute nothing to the rodlet structure. CU is a class II hydrophobin that is implicated in the pathogenicity of this fungus on elm trees. Required for hydrophobicity and adherence of the cells and acts as a parasitic fitness factor by protecting infectious propagules from desiccation. Reduces the interfacial tension of both oil-water and air-water interfaces. This is Class II hydrophobin CU from Ophiostoma ulmi (Dutch elm disease fungus).